Here is a 570-residue protein sequence, read N- to C-terminus: Sulfite reductase [NADPH] hemoprotein beta-component (570 aa).

Cys-434, Cys-440, Cys-479, and Cys-483 together coordinate [4Fe-4S] cluster. Cys-483 lines the siroheme pocket.

This sequence belongs to the nitrite and sulfite reductase 4Fe-4S domain family. As to quaternary structure, alpha(8)-beta(8). The alpha component is a flavoprotein, the beta component is a hemoprotein. The cofactor is siroheme. It depends on [4Fe-4S] cluster as a cofactor.

It catalyses the reaction hydrogen sulfide + 3 NADP(+) + 3 H2O = sulfite + 3 NADPH + 4 H(+). It functions in the pathway sulfur metabolism; hydrogen sulfide biosynthesis; hydrogen sulfide from sulfite (NADPH route): step 1/1. Its function is as follows. Component of the sulfite reductase complex that catalyzes the 6-electron reduction of sulfite to sulfide. This is one of several activities required for the biosynthesis of L-cysteine from sulfate. The protein is Sulfite reductase [NADPH] hemoprotein beta-component of Escherichia coli (strain SMS-3-5 / SECEC).